A 289-amino-acid chain; its full sequence is MGIAPVSETENDEAAQRLQSWIALGYNADMAWMANPKRQNIRELLPSARSVIAVGLNYYTPHQRSGDPAHGKISRYAWGRDYHRVLTKKLKALNLWLEQQVPDLQSRYYVDTGPIQEKAWAERAGLGWVGKNGNLISRDYGSWLFLGEIVTNITLQGDRPHSQHCGTCTRCLEACPTQAIVEPFVVDSNKCIAYHTIENRAEILPTAIADNLQGWVAGCDICQDVCPWNQRFAQPTDVADFDPYEGNLNPELETLANITEADWQQQFTASALRRIKPAMLRRNAQANLQ.

Asp-111 acts as the Proton donor in catalysis. In terms of domain architecture, 4Fe-4S ferredoxin-type spans 156–185; the sequence is QGDRPHSQHCGTCTRCLEACPTQAIVEPFV. Residues Cys-165, Cys-168, Cys-171, Cys-175, Cys-191, Cys-219, Cys-222, and Cys-226 each coordinate [4Fe-4S] cluster.

The protein belongs to the QueG family. In terms of assembly, monomer. The cofactor is cob(II)alamin. It depends on [4Fe-4S] cluster as a cofactor.

It localises to the cytoplasm. It catalyses the reaction epoxyqueuosine(34) in tRNA + AH2 = queuosine(34) in tRNA + A + H2O. The protein operates within tRNA modification; tRNA-queuosine biosynthesis. Functionally, catalyzes the conversion of epoxyqueuosine (oQ) to queuosine (Q), which is a hypermodified base found in the wobble positions of tRNA(Asp), tRNA(Asn), tRNA(His) and tRNA(Tyr). This is Epoxyqueuosine reductase from Synechocystis sp. (strain ATCC 27184 / PCC 6803 / Kazusa).